The chain runs to 120 residues: Ribonuclease P protein component 2 (120 aa).

The protein belongs to the eukaryotic/archaeal RNase P protein component 2 family. Consists of a catalytic RNA component and at least 4-5 protein subunits.

The protein resides in the cytoplasm. It catalyses the reaction Endonucleolytic cleavage of RNA, removing 5'-extranucleotides from tRNA precursor.. Its function is as follows. Part of ribonuclease P, a protein complex that generates mature tRNA molecules by cleaving their 5'-ends. This is Ribonuclease P protein component 2 from Thermococcus kodakarensis (strain ATCC BAA-918 / JCM 12380 / KOD1) (Pyrococcus kodakaraensis (strain KOD1)).